Consider the following 645-residue polypeptide: DNA ligase (645 aa).

Residues 30–34 (DAEFD) and 72–73 (SQ) each bind NAD(+). Lys99 functions as the N6-AMP-lysine intermediate in the catalytic mechanism. Arg120, Glu163, Lys275, and Lys296 together coordinate NAD(+). Residues Cys387, Cys390, Cys403, and Cys408 each coordinate Zn(2+). Residues 564-645 (EEGAVLKGLS…EAFLNLIGKV (82 aa)) enclose the BRCT domain.

It belongs to the NAD-dependent DNA ligase family. LigA subfamily. It depends on Mg(2+) as a cofactor. Requires Mn(2+) as cofactor.

It carries out the reaction NAD(+) + (deoxyribonucleotide)n-3'-hydroxyl + 5'-phospho-(deoxyribonucleotide)m = (deoxyribonucleotide)n+m + AMP + beta-nicotinamide D-nucleotide.. Functionally, DNA ligase that catalyzes the formation of phosphodiester linkages between 5'-phosphoryl and 3'-hydroxyl groups in double-stranded DNA using NAD as a coenzyme and as the energy source for the reaction. It is essential for DNA replication and repair of damaged DNA. The sequence is that of DNA ligase from Treponema denticola (strain ATCC 35405 / DSM 14222 / CIP 103919 / JCM 8153 / KCTC 15104).